The sequence spans 225 residues: Octanoyltransferase (225 aa).

The region spanning Gly43–Gly225 is the BPL/LPL catalytic domain. Substrate-binding positions include Arg82 to His89, Ala157 to Gly159, and Gly170 to Ser172. The active-site Acyl-thioester intermediate is the Cys188.

This sequence belongs to the LipB family.

It is found in the cytoplasm. The catalysed reaction is octanoyl-[ACP] + L-lysyl-[protein] = N(6)-octanoyl-L-lysyl-[protein] + holo-[ACP] + H(+). Its pathway is protein modification; protein lipoylation via endogenous pathway; protein N(6)-(lipoyl)lysine from octanoyl-[acyl-carrier-protein]: step 1/2. Functionally, catalyzes the transfer of endogenously produced octanoic acid from octanoyl-acyl-carrier-protein onto the lipoyl domains of lipoate-dependent enzymes. Lipoyl-ACP can also act as a substrate although octanoyl-ACP is likely to be the physiological substrate. In Parvibaculum lavamentivorans (strain DS-1 / DSM 13023 / NCIMB 13966), this protein is Octanoyltransferase.